We begin with the raw amino-acid sequence, 200 residues long: MARYTGPTWKISRRLGISLSGTGKELQKRPYAPGQHGPNQRKKLSEYGLQLQEKQKLRHMYGVNERQFRRIFNDAGKMAGIHGENFMILLESRLDNLVYRMGLARTRRAARQLVNHGHITVDGQRVDIPSYRVKPGQVIGVREKSRNLQVIKESLESNDFVPAYVTFDADKLEGTYSRFPERSELPAEITEALIVEFYSR.

The segment at 22 to 41 (TGKELQKRPYAPGQHGPNQR) is disordered. One can recognise an S4 RNA-binding domain in the interval 92-152 (SRLDNLVYRM…EKSRNLQVIK (61 aa)).

This sequence belongs to the universal ribosomal protein uS4 family. As to quaternary structure, part of the 30S ribosomal subunit. Contacts protein S5. The interaction surface between S4 and S5 is involved in control of translational fidelity.

Functionally, one of the primary rRNA binding proteins, it binds directly to 16S rRNA where it nucleates assembly of the body of the 30S subunit. With S5 and S12 plays an important role in translational accuracy. In Halalkalibacterium halodurans (strain ATCC BAA-125 / DSM 18197 / FERM 7344 / JCM 9153 / C-125) (Bacillus halodurans), this protein is Small ribosomal subunit protein uS4.